We begin with the raw amino-acid sequence, 236 residues long: Orotidine 5'-phosphate decarboxylase (236 aa).

Substrate is bound by residues Asp-14, Lys-36, 63 to 72 (DLKYHDIPNT), Thr-122, Arg-183, Gln-192, Gly-212, and Arg-213. Lys-65 functions as the Proton donor in the catalytic mechanism.

The protein belongs to the OMP decarboxylase family. Type 1 subfamily. Homodimer.

The catalysed reaction is orotidine 5'-phosphate + H(+) = UMP + CO2. Its pathway is pyrimidine metabolism; UMP biosynthesis via de novo pathway; UMP from orotate: step 2/2. Catalyzes the decarboxylation of orotidine 5'-monophosphate (OMP) to uridine 5'-monophosphate (UMP). This Halorhodospira halophila (strain DSM 244 / SL1) (Ectothiorhodospira halophila (strain DSM 244 / SL1)) protein is Orotidine 5'-phosphate decarboxylase.